Here is a 198-residue protein sequence, read N- to C-terminus: Chromophore lyase CpcT/CpeT 3 (198 aa).

Belongs to the CpcT/CpeT biliprotein lyase family.

Functionally, covalently attaches a chromophore to Cys residue(s) of phycobiliproteins. The sequence is that of Chromophore lyase CpcT/CpeT 3 from Synechococcus sp. (strain JA-3-3Ab) (Cyanobacteria bacterium Yellowstone A-Prime).